A 131-amino-acid chain; its full sequence is MKLHLLKSKIHNARVTSGDLEYEGSITIDQELLLLAEMIPNEKVLVVNNNNGERFETYIINGEPGSRVIQLNGAAARCALPGDEIIIMTFAVMDEKKARTFQPMVLIVDHLNNPKRRHRIGQEDEQLSSSI.

The Schiff-base intermediate with substrate; via pyruvic acid role is filled by S25. Position 25 is a pyruvic acid (Ser) (S25). Residue T57 participates in substrate binding. The Proton donor role is filled by Y58. 73-75 (GAA) provides a ligand contact to substrate.

Belongs to the PanD family. As to quaternary structure, heterooctamer of four alpha and four beta subunits. Pyruvate is required as a cofactor. Is synthesized initially as an inactive proenzyme, which is activated by self-cleavage at a specific serine bond to produce a beta-subunit with a hydroxyl group at its C-terminus and an alpha-subunit with a pyruvoyl group at its N-terminus.

Its subcellular location is the cytoplasm. The enzyme catalyses L-aspartate + H(+) = beta-alanine + CO2. It functions in the pathway cofactor biosynthesis; (R)-pantothenate biosynthesis; beta-alanine from L-aspartate: step 1/1. Functionally, catalyzes the pyruvoyl-dependent decarboxylation of aspartate to produce beta-alanine. The protein is Aspartate 1-decarboxylase of Chlorobium phaeobacteroides (strain DSM 266 / SMG 266 / 2430).